Consider the following 20-residue polypeptide: Hemocyanin subunit Ia (20 aa).

Positions Ala1–Val20 are disordered.

It belongs to the tyrosinase family. Hemocyanin subfamily. As to quaternary structure, composed of 3 major subunits (IB, II and III) and 1 minor subunit (IA) which form homohexamers and heterohexamers. May also form larger structures. As to expression, hemolymph.

It localises to the secreted. It is found in the extracellular space. Its function is as follows. Hemocyanins are copper-containing oxygen carriers occurring freely dissolved in the hemolymph of many mollusks and arthropods. The polypeptide is Hemocyanin subunit Ia (Panulirus japonicus (Japanese spiny lobster)).